The chain runs to 110 residues: UPF0060 membrane protein Ping_0587 (110 aa).

4 helical membrane-spanning segments follow: residues 6–26 (IFGI…LPYL), 33–53 (SIWL…LLTL), 61–81 (TYAA…WLVE), and 87–107 (MTDL…MFGP).

It belongs to the UPF0060 family.

The protein localises to the cell inner membrane. This Psychromonas ingrahamii (strain DSM 17664 / CCUG 51855 / 37) protein is UPF0060 membrane protein Ping_0587.